We begin with the raw amino-acid sequence, 348 residues long: UPF0324 membrane protein BH02290 (348 aa).

A run of 11 helical transmembrane segments spans residues 13-35, 45-67, 74-96, 106-128, 135-157, 167-189, 196-218, 223-245, 257-275, 285-307, and 319-341; these read AFLN…AYGL, QAWL…CFTL, GITF…SISV, LLAS…GRLF, AMLV…APVI, SIAF…HPFL, YGVL…ASVS, QIAT…ALSI, LHTL…MLIR, LIPI…GLGV, and VILA…IQLN.

Belongs to the UPF0324 family.

It is found in the cell membrane. The protein is UPF0324 membrane protein BH02290 of Bartonella henselae (strain ATCC 49882 / DSM 28221 / CCUG 30454 / Houston 1) (Rochalimaea henselae).